Consider the following 331-residue polypeptide: Bifunctional nuclease 1 (331 aa).

A BFN domain is found at 126–261 (CVQNNPRVLR…RIAYNNGLKV (136 aa)). The region spanning 291–326 (EAQEFDLVRNMLVAAVEERYKDAAQYRDQLFMFRAK) is the UVR domain.

This sequence belongs to the bifunctional nuclease family.

The protein resides in the nucleus. Functionally, bifunctional nuclease with both RNase and DNase activities. Involved in basal defense response. Participates in abscisic acid-derived callose deposition following infection by a necrotrophic pathogen. The protein is Bifunctional nuclease 1 (BBD1) of Oryza sativa subsp. indica (Rice).